Here is a 128-residue protein sequence, read N- to C-terminus: 14.7 kDa protein (128 aa).

The C4-type zinc finger occupies 65–94; sequence CFDCGAYLYDDHVCKRFTSRSNSDCLSVIH.

Functionally, may act as a regulatory factor during viral transcription. In Shallot virus X (ShVX), this protein is 14.7 kDa protein.